Consider the following 445-residue polypeptide: Putative diacyglycerol O-acyltransferase Rv2285 (445 aa).

His135 serves as the catalytic Proton acceptor.

The protein belongs to the long-chain O-acyltransferase family.

The catalysed reaction is an acyl-CoA + a 1,2-diacyl-sn-glycerol = a triacyl-sn-glycerol + CoA. It carries out the reaction di-(9Z)-octadecenoylglycerol + (9Z)-octadecenoyl-CoA = 1,2,3-tri-(9Z-octadecenoyl)-glycerol + CoA. Its pathway is glycerolipid metabolism; triacylglycerol biosynthesis. In terms of biological role, catalyzes the terminal and only committed step in triacylglycerol synthesis by using diacylglycerol and fatty acyl CoA as substrates. Required for storage lipid synthesis. Its function is as follows. Upon expression in E.coli functions weakly as a triacylglycerol synthase, making triacylglycerol (TG) from diolein and long-chain fatty acyl-CoA. Has very weak wax synthase activity, incorporating palmityl alcohol into wax esters in the presence of palmitoyl-CoA. This chain is Putative diacyglycerol O-acyltransferase Rv2285, found in Mycobacterium tuberculosis (strain ATCC 25618 / H37Rv).